A 157-amino-acid chain; its full sequence is Ribosomal RNA large subunit methyltransferase H (157 aa).

S-adenosyl-L-methionine contacts are provided by residues Leu-73, Gly-104, and 121–126 (LSPLTL).

The protein belongs to the RNA methyltransferase RlmH family. As to quaternary structure, homodimer.

Its subcellular location is the cytoplasm. The enzyme catalyses pseudouridine(1915) in 23S rRNA + S-adenosyl-L-methionine = N(3)-methylpseudouridine(1915) in 23S rRNA + S-adenosyl-L-homocysteine + H(+). Functionally, specifically methylates the pseudouridine at position 1915 (m3Psi1915) in 23S rRNA. The protein is Ribosomal RNA large subunit methyltransferase H of Acidithiobacillus ferrooxidans (strain ATCC 23270 / DSM 14882 / CIP 104768 / NCIMB 8455) (Ferrobacillus ferrooxidans (strain ATCC 23270)).